The following is a 1137-amino-acid chain: MVCGCSALLPLPNPRPTMPATPNFLANPSSSSRWIPLQPMPVAWAFVQKTSALLWLLLLGTSLSPAWGQAKIPLETVKLWADTFGGDLYNTVTKYSGSLLLQKKYKDVESSLKIEEVDGLELVRKFSEDMENMLRRKVEAVQNLVEAAEEADLNHEFNESLVFDYYNSVLINERDEKGNFVELGAEFLLESNAHFSNLPVNTSISSVQLPTNVYNKDPDILNGVYMSEALNAVFVENFQRDPTLTWQYFGSATGFFRIYPGIKWTPDENGVITFDCRNRGWYIQAATSPKDIVILVDVSGSMKGLRMTIAKHTITTILDTLGENDFINIIAYNDYVHYIEPCFKGILVQADRDNREHFKLLVEELMVKGVGVVDQALREAFQILKQFQEAKQGSLCNQAIMLISDGAVEDYEPVFEKYNWPDCKVRVFTYLIGREVSFADRMKWIACNNKGYYTQISTLADTQENVMEYLHVLSRPMVINHDHDIIWTEAYMDSKLLSSQAQSLTLLTTVAMPVFSKKNETRSHGILLGVVGSDVALRELMKLAPRYKLGVHGYAFLNTNNGYILSHPDLRPLYREGKKLKPKPNYNSVDLSEVEWEDQAESLRTAMINRETGTLSMDVKVPMDKGKRVLFLTNDYFFTDISDTPFSLGVVLSRGHGEYILLGNTSVEEGLHDLLHPDLALAGDWIYCITDIDPDHRKLSQLEAMIRFLTRKDPDLECDEELVREVLFDAVVTAPMEAYWTALALNMSEESEHVVDMAFLGTRAGLLRSSLFVGSEKVSDRKFLTPEDEASVFTLDRFPLWYRQASEHPAGSFVFNLRWAEGPESAGEPMVVTASTAVAVTVDKRTAIAAAAGVQMKLEFLQRKFWAATRQCSTVDGPCTQSCEDSDLDCFVIDNNGFILISKRSRETGRFLGEVDGAVLTQLLSMGVFSQVTMYDYQAMCKPSSHHHSAAQPLVSPISAFLTATRWLLQELVLFLLEWSVWGSWYDRGAEAKSVFHHSHKHKKQDPLQPCDTEYPVFVYQPAIREANGIVECGPCQKVFVVQQIPNSNLLLLVTDPTCDCSIFPPVLQEATEVKYNASVKCDRMRSQKLRRRPDSCHAFHPEENAQDCGGASDTSASPPLLLLPVCAWGLLPQLLR.

Positions 1–19 are cleaved as a signal peptide; sequence MVCGCSALLPLPNPRPTMP. The Extracellular portion of the chain corresponds to 20–1115; sequence ATPNFLANPS…AQDCGGASDT (1096 aa). The N-linked (GlcNAc...) asparagine glycan is linked to Asn201. The VWFA domain maps to 291–473; that stretch reads DIVILVDVSG…ENVMEYLHVL (183 aa). Residues Asp297, Ser299, and Ser301 each contribute to the a divalent metal cation site. The MIDAS-like motif motif lies at 297–301; it reads DVSGS. Cys447 and Cys1097 are oxidised to a cystine. The region spanning 487-580 is the Cache domain; sequence WTEAYMDSKL…RPLYREGKKL (94 aa). A glycan (N-linked (GlcNAc...) asparagine) is linked at Asn664. A helical membrane pass occupies residues 1116-1136; that stretch reads SASPPLLLLPVCAWGLLPQLL. Residue Arg1137 is a topological domain, cytoplasmic.

The protein belongs to the calcium channel subunit alpha-2/delta family. Dimer formed of alpha-2-2 and delta-2 chains; disulfide-linked. Voltage-dependent calcium channels are multisubunit complexes, consisting of alpha-1 (CACNA1), alpha-2 (CACNA2D), beta (CACNB) and delta (CACNA2D) subunits in a 1:1:1:1 ratio. Interacts with CACNA1C and CACNB3. Post-translationally, may be proteolytically processed into subunits alpha-2-4 and delta-4 that are disulfide-linked. It is however unclear whether such cleavage really takes place in vivo and has a functional role. Predominantly expressed in certain types of endocrine cells. Present in the Paneth cells of the small intestine. Also present in the erythroblasts in the fetal liver, in the cells of the zona reticularis of the adrenal gland and in the basophils of the pituitary. Present at low level in some brain regions such as the cerebellum (at protein level).

It is found in the membrane. The alpha-2/delta subunit of voltage-dependent calcium channels regulates calcium current density and activation/inactivation kinetics of the calcium channel. The protein is Voltage-dependent calcium channel subunit alpha-2/delta-4 (CACNA2D4) of Homo sapiens (Human).